Consider the following 175-residue polypeptide: uncharacterized protein (175 aa).

Residues 1–2 (ME) are Extracellular-facing. The chain crosses the membrane as a helical span at residues 3-23 (SIILSIAIFIGVLLGTSVGAG). Residues 24–151 (SGSSISPDVD…TGISTTMNAR (128 aa)) are Cytoplasmic-facing. The segment at 26-88 (SSISPDVDAG…DVGAGSGSSI (63 aa)) is disordered. The span at 59 to 78 (FSGSSTSPDVDAGSGSSTSP) shows a compositional bias: polar residues. A helical membrane pass occupies residues 152–172 (VAVLITAAILSAPVTAIALLE). The Extracellular segment spans residues 173–175 (ARR).

Its subcellular location is the membrane. This is an uncharacterized protein from Saccharomyces cerevisiae (strain ATCC 204508 / S288c) (Baker's yeast).